The sequence spans 218 residues: Ribose-5-phosphate isomerase A (218 aa).

Substrate contacts are provided by residues threonine 28–threonine 31, aspartate 81–aspartate 84, and lysine 94–glycine 97. Glutamate 103 acts as the Proton acceptor in catalysis. Substrate is bound at residue lysine 121.

Belongs to the ribose 5-phosphate isomerase family. As to quaternary structure, homodimer.

It carries out the reaction aldehydo-D-ribose 5-phosphate = D-ribulose 5-phosphate. The protein operates within carbohydrate degradation; pentose phosphate pathway; D-ribose 5-phosphate from D-ribulose 5-phosphate (non-oxidative stage): step 1/1. Its function is as follows. Catalyzes the reversible conversion of ribose-5-phosphate to ribulose 5-phosphate. In Vibrio vulnificus (strain CMCP6), this protein is Ribose-5-phosphate isomerase A.